A 404-amino-acid polypeptide reads, in one-letter code: Protein L-Myc-1b (404 aa).

Disordered regions lie at residues Lys-175 to Asp-195 and Gln-238 to Arg-331. Over residues Val-287–Ser-315 the composition is skewed to polar residues. The bHLH domain occupies Asp-321–Leu-373. Positions Leu-373–Leu-401 are leucine-zipper.

Efficient DNA binding requires dimerization with another bHLH protein. Binds DNA as a heterodimer with max.

Its subcellular location is the nucleus. This is Protein L-Myc-1b from Danio rerio (Zebrafish).